Reading from the N-terminus, the 174-residue chain is Crossover junction endodeoxyribonuclease RuvC (174 aa).

Active-site residues include Asp-8, Glu-67, and Asp-139. Asp-8, Glu-67, and Asp-139 together coordinate Mg(2+).

The protein belongs to the RuvC family. Homodimer which binds Holliday junction (HJ) DNA. The HJ becomes 2-fold symmetrical on binding to RuvC with unstacked arms; it has a different conformation from HJ DNA in complex with RuvA. In the full resolvosome a probable DNA-RuvA(4)-RuvB(12)-RuvC(2) complex forms which resolves the HJ. Requires Mg(2+) as cofactor.

It is found in the cytoplasm. The catalysed reaction is Endonucleolytic cleavage at a junction such as a reciprocal single-stranded crossover between two homologous DNA duplexes (Holliday junction).. In terms of biological role, the RuvA-RuvB-RuvC complex processes Holliday junction (HJ) DNA during genetic recombination and DNA repair. Endonuclease that resolves HJ intermediates. Cleaves cruciform DNA by making single-stranded nicks across the HJ at symmetrical positions within the homologous arms, yielding a 5'-phosphate and a 3'-hydroxyl group; requires a central core of homology in the junction. The consensus cleavage sequence is 5'-(A/T)TT(C/G)-3'. Cleavage occurs on the 3'-side of the TT dinucleotide at the point of strand exchange. HJ branch migration catalyzed by RuvA-RuvB allows RuvC to scan DNA until it finds its consensus sequence, where it cleaves and resolves the cruciform DNA. In Pseudomonas fluorescens (strain SBW25), this protein is Crossover junction endodeoxyribonuclease RuvC.